We begin with the raw amino-acid sequence, 470 residues long: Membrane-bound lytic murein transglycosylase F (470 aa).

Positions 1 to 24 are cleaved as a signal peptide; sequence MPSLKTKGAAGKFASLLLVLALSA. A non-LT domain region spans residues 25-262; sequence CSRPAPPPET…RALERYFGHV (238 aa). Residues 263–470 are LT domain; that stretch reads KRLGSSDILG…RGEDGLPPPG (208 aa). Glutamate 309 is an active-site residue.

The protein in the N-terminal section; belongs to the bacterial solute-binding protein 3 family. This sequence in the C-terminal section; belongs to the transglycosylase Slt family.

It localises to the cell outer membrane. It catalyses the reaction Exolytic cleavage of the (1-&gt;4)-beta-glycosidic linkage between N-acetylmuramic acid (MurNAc) and N-acetylglucosamine (GlcNAc) residues in peptidoglycan, from either the reducing or the non-reducing ends of the peptidoglycan chains, with concomitant formation of a 1,6-anhydrobond in the MurNAc residue.. Its function is as follows. Murein-degrading enzyme that degrades murein glycan strands and insoluble, high-molecular weight murein sacculi, with the concomitant formation of a 1,6-anhydromuramoyl product. Lytic transglycosylases (LTs) play an integral role in the metabolism of the peptidoglycan (PG) sacculus. Their lytic action creates space within the PG sacculus to allow for its expansion as well as for the insertion of various structures such as secretion systems and flagella. The protein is Membrane-bound lytic murein transglycosylase F of Thiobacillus denitrificans (strain ATCC 25259 / T1).